The primary structure comprises 1079 residues: DNA annealing helicase and endonuclease ZRANB3 (1079 aa).

Positions 46–208 (IFALKRNGRC…FMQIEALFPQ (163 aa)) constitute a Helicase ATP-binding domain. Residues 46-481 (IFALKRNGRC…GRKEKIQAEE (436 aa)) are DNA annealing helicase activity. 59–66 (DEMGLGKT) serves as a coordination point for ATP. The short motif at 157–160 (DESH) is the DEAH box element. A Helicase C-terminal domain is found at 325–481 (AVKDYIKMML…GRKEKIQAEE (157 aa)). The PIP-box motif lies at 519 to 526 (QHDIRSFF). Residue serine 569 is modified to Phosphoserine. A disordered region spans residues 582-601 (ASEDHCSPSEETPSQSKQIR). Positions 590–600 (SEETPSQSKQI) are enriched in polar residues. Residues 621 to 650 (PVEGWQCSLCTYINNSELPYCEMCETPQGS) form a RanBP2-type zinc finger. Cysteine 630 carries the post-translational modification (Microbial infection) S-methylcysteine. A disordered region spans residues 689 to 725 (LAQSEPGQLADSKEETPKIEKEDGLTSQPGNEQWKSS). Positions 699–712 (DSKEETPKIEKEDG) are enriched in basic and acidic residues. Residues 713 to 725 (LTSQPGNEQWKSS) show a composition bias toward polar residues. The HNH domain maps to 1011–1051 (PGEGHFWQVDHIKPVYGGGGQCSLDNLQTLCTVCHKERTAR). The interval 1011-1079 (PGEGHFWQVD…SDITRFLVKK (69 aa)) is endonuclease activity. Residues 1074 to 1078 (RFLVK) carry the APIM motif motif.

Belongs to the SNF2/RAD54 helicase family. Interacts (via PIP-box and RanBP2-type zinc finger) with PCNA (when PCNA is polyubiquitinated via 'Lys-63'-linked polyubiquitin). (Microbial infection) Methylation at Cys-630 by enteropathogenic E.coli protein NleE or S.flexneri protein OspZ: methylation disrupts ability to bind 'Lys-63'-linked ubiquitin.

It is found in the nucleus. The protein resides in the chromosome. Its function is as follows. DNA annealing helicase and endonuclease required to maintain genome stability at stalled or collapsed replication forks by facilitating fork restart and limiting inappropriate recombination that could occur during template switching events. Recruited to the sites of stalled DNA replication by polyubiquitinated PCNA and acts as a structure-specific endonuclease that cleaves the replication fork D-loop intermediate, generating an accessible 3'-OH group in the template of the leading strand, which is amenable to extension by DNA polymerase. In addition to endonuclease activity, also catalyzes the fork regression via annealing helicase activity in order to prevent disintegration of the replication fork and the formation of double-strand breaks. This Homo sapiens (Human) protein is DNA annealing helicase and endonuclease ZRANB3.